The primary structure comprises 261 residues: tRNA (guanine-N(1)-)-methyltransferase (261 aa).

Residues Gly113 and 133-138 (IGDYVL) contribute to the S-adenosyl-L-methionine site.

The protein belongs to the RNA methyltransferase TrmD family. In terms of assembly, homodimer.

It localises to the cytoplasm. The enzyme catalyses guanosine(37) in tRNA + S-adenosyl-L-methionine = N(1)-methylguanosine(37) in tRNA + S-adenosyl-L-homocysteine + H(+). Its function is as follows. Specifically methylates guanosine-37 in various tRNAs. This Xylella fastidiosa (strain M23) protein is tRNA (guanine-N(1)-)-methyltransferase.